The chain runs to 47 residues: PhoP/PhoQ regulator MgrB (47 aa).

A helical transmembrane segment spans residues 6-26; the sequence is WAILLAVLVACLLLWMQTLNV.

It belongs to the MgrB family. In terms of assembly, may form homooligomers. Probably interacts with the periplasmic domain of PhoQ.

It is found in the cell inner membrane. PhoP-regulated transcription is redox-sensitive, being activated when the periplasm becomes more reducing. MgrB acts between DsbA/DsbB and PhoP/PhoQ in this pathway. Represses PhoP/PhoQ signaling, possibly by binding to the periplasmic domain of PhoQ, altering its activity and that of downstream effector PhoP. The sequence is that of PhoP/PhoQ regulator MgrB from Cronobacter sakazakii (strain ATCC BAA-894) (Enterobacter sakazakii).